Here is a 332-residue protein sequence, read N- to C-terminus: Malate dehydrogenase (332 aa).

15 to 21 (GAAGHIG) is an NAD(+) binding site. 2 residues coordinate substrate: Arg-96 and Arg-102. NAD(+)-binding positions include Asn-109 and 133 to 135 (VGN). Residues Asn-135 and Arg-166 each coordinate substrate. The Proton acceptor role is filled by His-191.

Belongs to the LDH/MDH superfamily. MDH type 2 family.

The catalysed reaction is (S)-malate + NAD(+) = oxaloacetate + NADH + H(+). In terms of biological role, catalyzes the reversible oxidation of malate to oxaloacetate. This Mycolicibacterium vanbaalenii (strain DSM 7251 / JCM 13017 / BCRC 16820 / KCTC 9966 / NRRL B-24157 / PYR-1) (Mycobacterium vanbaalenii) protein is Malate dehydrogenase.